The following is a 553-amino-acid chain: MEAEKRLFLKALKEKFEEDPKEKYTKFYTYGGWEQSVRKREFVAANEKVLAEKRQGVPLYNPDIGVPLGQRKLMPYKLSGTDSYCEGDDLHFMNNAAIQQLWDDIRRTVVVGMDTAHSVLEKRLGVEVTPETINEYMHTINHALSGGAVVQEHMVEVHPSLAWDSYARIFTGDDELAAELDSRFLIDINKLFPAEQAEALKKAIGKKTYQVSRVPSLVGRVCDGGTISRWSAMQIGMSFITAYKLCAGEAATADFSYASKHADVIQMGNALPGRRARGPNEPGGIQFGILSDVVQTTRVSDDPVEQSLEVVAAGAALYDQIWLGAYMSGGVGFTQYATAAYTDDILDDFSYYALDYVEKKYGRMGTKATMDVVEDIASEVTLYSLEQYDEYPALLEDHFGGSQRAAVAAAASGIGVCMATGNSNAGVNGWYLSQILHKEYHSRLGFYGYDLQDQCGASNSLAIRNDESAPLELRGPNYPNYAMNVGHQGEYAGIAQAAHSARGDAFAMSALIKVAFADPMLVFDFSKPRKEFARGALREFDAAGERDVILPAK.

Glutamine 151 serves as a coordination point for coenzyme F430. Coenzyme B-binding positions include arginine 229, 260 to 261 (KH), and arginine 274. Coenzyme M is bound by residues tyrosine 336 and tyrosine 447.

This sequence belongs to the methyl-coenzyme M reductase alpha subunit family. In terms of assembly, MCR is a hexamer of two alpha, two beta, and two gamma chains, forming a dimer of heterotrimers. The cofactor is coenzyme F430.

It is found in the cytoplasm. The catalysed reaction is coenzyme B + methyl-coenzyme M = methane + coenzyme M-coenzyme B heterodisulfide. The protein operates within one-carbon metabolism; methyl-coenzyme M reduction; methane from methyl-coenzyme M: step 1/1. Functionally, component of the methyl-coenzyme M reductase (MCR) I that catalyzes the reductive cleavage of methyl-coenzyme M (CoM-S-CH3 or 2-(methylthio)ethanesulfonate) using coenzyme B (CoB or 7-mercaptoheptanoylthreonine phosphate) as reductant which results in the production of methane and the mixed heterodisulfide of CoB and CoM (CoM-S-S-CoB). This is the final step in methanogenesis. The polypeptide is Methyl-coenzyme M reductase subunit alpha (mcrA) (Methanococcus vannielii).